The primary structure comprises 1292 residues: Kinesin-like protein KIN-12A (1292 aa).

Positions 1-86 (MKKHFTLPRN…LSAETATESG (86 aa)) are disordered. The segment covering 19-29 (PHSPNPSISKS) has biased composition (low complexity). Residues 62-71 (PLPPRPPPSN) show a composition bias toward pro residues. In terms of domain architecture, Kinesin motor spans 91 to 426 (GVKVIVRMKP…LRFAQRAKAI (336 aa)). 165-172 (GQTGSGKT) contributes to the ATP binding site. Microtubules-binding regions lie at residues 293–297 (SSRSH), 326–332 (VDLAGSE), and 375–379 (HIPYR). A neck region spans residues 424-461 (KAIQNKAVVNEVMQDDVNFLRGVIHQLRDELQRMKNDG). The tract at residues 677-724 (SVSPTIRNSRKSLKTSELSTASQKDSEGENLVTEAADPSPATSKKMNN) is disordered. Coiled coils occupy residues 945-992 (EVLK…CYID) and 1047-1232 (SEEL…NQLV).

Belongs to the TRAFAC class myosin-kinesin ATPase superfamily. Kinesin family. KIN-12 subfamily. In terms of assembly, homodimer and heterodimer with KIN12B. Interacts with TIO.

It localises to the cytoplasm. The protein localises to the cytoskeleton. The protein resides in the phragmoplast. Its function is as follows. Plus-end directed kinesin-like motor enzyme that plays a critical role in the organization of phragmoplast microtubules during cytokinesis. Constitutes a signaling module in association with serine/threonine-protein kinase TIO that is required to support phragmoplast expansion and cell-plate growth in plant cells. Binds microtubules in an ATP-sensitive manner. This chain is Kinesin-like protein KIN-12A, found in Arabidopsis thaliana (Mouse-ear cress).